The chain runs to 313 residues: 4-diphosphocytidyl-2-C-methyl-D-erythritol kinase (313 aa).

K29 is an active-site residue. 113 to 123 (PMGGGVGGGSS) contacts ATP. Residue D155 is part of the active site.

The protein belongs to the GHMP kinase family. IspE subfamily.

The enzyme catalyses 4-CDP-2-C-methyl-D-erythritol + ATP = 4-CDP-2-C-methyl-D-erythritol 2-phosphate + ADP + H(+). It participates in isoprenoid biosynthesis; isopentenyl diphosphate biosynthesis via DXP pathway; isopentenyl diphosphate from 1-deoxy-D-xylulose 5-phosphate: step 3/6. Its function is as follows. Catalyzes the phosphorylation of the position 2 hydroxy group of 4-diphosphocytidyl-2C-methyl-D-erythritol. This is 4-diphosphocytidyl-2-C-methyl-D-erythritol kinase from Haemophilus influenzae (strain 86-028NP).